We begin with the raw amino-acid sequence, 95 residues long: Late cornified envelope protein 7A (95 aa).

It belongs to the LCE family.

Precursors of the cornified envelope of the stratum corneum. The protein is Late cornified envelope protein 7A of Homo sapiens (Human).